We begin with the raw amino-acid sequence, 341 residues long: tRNA (guanine-N(7)-)-methyltransferase (341 aa).

S-adenosyl-L-methionine contacts are provided by Glu75, Glu100, Asp127, and Asp150. Asp150 is an active-site residue. Substrate is bound at residue Lys154. Residues 156–161 (RHNKRR) form an interaction with RNA region. Asp186 serves as a coordination point for substrate.

It belongs to the class I-like SAM-binding methyltransferase superfamily. TrmB family.

The enzyme catalyses guanosine(46) in tRNA + S-adenosyl-L-methionine = N(7)-methylguanosine(46) in tRNA + S-adenosyl-L-homocysteine. The protein operates within tRNA modification; N(7)-methylguanine-tRNA biosynthesis. Functionally, catalyzes the formation of N(7)-methylguanine at position 46 (m7G46) in tRNA. The chain is tRNA (guanine-N(7)-)-methyltransferase from Xanthomonas euvesicatoria pv. vesicatoria (strain 85-10) (Xanthomonas campestris pv. vesicatoria).